Consider the following 484-residue polypeptide: Poly(A) RNA polymerase GLD2 (484 aa).

Phosphoserine occurs at positions 62 and 69. The Nuclear localization signal signature appears at 76–92 (KRISDEKAFPLDGKRQR). Position 95 is a phosphoserine (Ser95). Positions 213 and 215 each coordinate Mg(2+). A PAP-associated domain is found at 386-440 (SLGDLLLGFLKYYATEFDWNTQMISVREAKAIPRPDDMEWRNKYICVEEPFDGTN).

The protein belongs to the DNA polymerase type-B-like family. GLD2 subfamily. As to quaternary structure, interacts with CPEB1, CPEB2, CPSF1 and PABPC1. Interacts with QKI isoform QKI7; promoting recruitment to miRNA miR-122 and miR-122 stabilization. Mg(2+) serves as cofactor. Requires Mn(2+) as cofactor. Ubiquitous. In brain, it is highly expressed in the cerebral cortex, cerebellum, hippocampus and olfactory bulb.

The protein localises to the cytoplasm. It localises to the nucleus. It carries out the reaction RNA(n) + ATP = RNA(n)-3'-adenine ribonucleotide + diphosphate. In terms of biological role, cytoplasmic poly(A) RNA polymerase that adds successive AMP monomers to the 3'-end of specific RNAs, forming a poly(A) tail. In contrast to the canonical nuclear poly(A) RNA polymerase, it only adds poly(A) to selected cytoplasmic mRNAs. Does not play a role in replication-dependent histone mRNA degradation. Adds a single nucleotide to the 3' end of specific miRNAs, monoadenylation stabilizes and prolongs the activity of some but not all miRNAs. This chain is Poly(A) RNA polymerase GLD2 (Tent2), found in Mus musculus (Mouse).